Here is a 146-residue protein sequence, read N- to C-terminus: Snaclec mucetin subunit beta (146 aa).

A signal peptide spans 1–23; it reads MGRFIFVSFGLLVVFISLSGTEA. Cystine bridges form between cysteine 27–cysteine 38, cysteine 55–cysteine 144, and cysteine 121–cysteine 136. Positions 34–145 constitute a C-type lectin domain; that stretch reads YDEHCYQVFQ…CSSKRYVVCK (112 aa).

It belongs to the snaclec family. In terms of assembly, dimer and tetramer of heterodimers of alpha and beta subunits ((alphabeta)(2) and (alphabeta)(4)); disulfide-linked. These two multimeric forms are found. In terms of processing, the complex is glycosylated. In terms of tissue distribution, expressed by the venom gland.

It localises to the secreted. Functionally, potent platelet activator that acts via GPIb (GP1BA/GP1BB). After activation by the toxin, the receptor is redistributed on platelet surface thanks to cytoskeletal translocation. The indirect activation of integrin alpha-IIb/beta-3 (ITGA2B/ITGB3) also induced by the toxin is downstream the cytoskeletal translocation of GPIb. This Protobothrops mucrosquamatus (Taiwan habu) protein is Snaclec mucetin subunit beta.